The chain runs to 950 residues: A disintegrin and metalloproteinase with thrombospondin motifs 15 (950 aa).

Positions 1–17 (MLLLGILTLAFAGRTAG) are cleaved as a signal peptide. Positions 18-212 (GSEPEREVVV…SRRRSGRAKR (195 aa)) are excised as a propeptide. N-linked (GlcNAc...) asparagine glycosylation is present at Asn141. The interval 151 to 172 (SQGAHLLQRRGVPGGPSGDPTS) is disordered. The short motif at 172–179 (SRCGVASG) is the Cysteine switch element. Cys174 lines the Zn(2+) pocket. The Peptidase M12B domain maps to 218–427 (RYVETLVVAD…GHGDCLLDQP (210 aa)). Cystine bridges form between Cys293/Cys345, Cys322/Cys327, Cys339/Cys422, Cys377/Cys406, Cys448/Cys470, Cys459/Cys480, Cys465/Cys499, Cys493/Cys504, Cys528/Cys565, Cys532/Cys570, and Cys543/Cys555. Residue His361 participates in Zn(2+) binding. Residue Glu362 is part of the active site. Positions 365 and 371 each coordinate Zn(2+). A Disintegrin domain is found at 428–515 (SKPISLPEDL…ERHNLNKHRV (88 aa)). The 56-residue stretch at 516 to 571 (DGSWAKWDPYGPCSRTCGGGVQLARRQCTNPTPANGGKYCEGVRVKYRSCNLEPCP) folds into the TSP type-1 1 domain. Asn591, Asn623, and Asn679 each carry an N-linked (GlcNAc...) asparagine glycan. The spacer stretch occupies residues 701 to 838 (AIPAGASSID…SNQVEQPDDR (138 aa)). Positions 798 to 822 (FYLPKEPREDKSSHPKDPRGPSVLH) are disordered. The segment covering 802-816 (KEPREDKSSHPKDPR) has biased composition (basic and acidic residues). TSP type-1 domains follow at residues 839–895 (PPAR…EPCP) and 896–949 (TWEL…VLRP).

The cofactor is Zn(2+). In terms of processing, the precursor is cleaved by a furin endopeptidase. Glycosylated. Can be O-fucosylated by POFUT2 on a serine or a threonine residue found within the consensus sequence C1-X(2)-(S/T)-C2-G of the TSP type-1 repeat domains where C1 and C2 are the first and second cysteine residue of the repeat, respectively. Fucosylated repeats can then be further glycosylated by the addition of a beta-1,3-glucose residue by the glucosyltransferase, B3GALTL. Fucosylation mediates the efficient secretion of ADAMTS family members. Can be C-glycosylated with one or two mannose molecules on tryptophan residues within the consensus sequence W-X-X-W of the TPRs. Also N-glycosylated. These other glycosylations can also facilitate secretion. As to expression, expressed in fetal liver and kidney, but not in any of the adult tissues examined.

Its subcellular location is the secreted. It localises to the extracellular space. The protein resides in the extracellular matrix. It is found in the cell surface. In terms of biological role, metalloprotease which has proteolytic activity against the proteoglycan VCAN, cleaving it at the 'Glu-1428-|-1429-Ala' site. Cleaves VCAN in the pericellular matrix surrounding myoblasts, facilitating myoblast contact and fusion which is required for skeletal muscle development and regeneration. The protein is A disintegrin and metalloproteinase with thrombospondin motifs 15 (ADAMTS15) of Homo sapiens (Human).